Consider the following 350-residue polypeptide: Heat-inducible transcription repressor HrcA (350 aa).

Belongs to the HrcA family.

Its function is as follows. Negative regulator of class I heat shock genes (grpE-dnaK-dnaJ and groELS operons). Prevents heat-shock induction of these operons. The protein is Heat-inducible transcription repressor HrcA of Xanthomonas oryzae pv. oryzae (strain KACC10331 / KXO85).